A 322-amino-acid chain; its full sequence is Structural glycoprotein p40 (322 aa).

N-linked (GlcNAc...) asparagine; by host glycans are attached at residues Asn130, Asn283, and Asn290.

Belongs to the baculoviridae gp41 family.

It localises to the virion. This Heliothis zea nuclear polyhedrosis virus (HzSNPV) protein is Structural glycoprotein p40 (P40).